The following is a 106-amino-acid chain: Ribosomal protein eL42-like (106 aa).

Residues 26–53 form a disordered region; it reads YKKGKDSLYAQGRRRYDRKQSGYGGQTK. An N6-methyllysine modification is found at K53.

The protein belongs to the eukaryotic ribosomal protein eL42 family. Ubiquitously expressed.

The protein resides in the cytoplasm. This chain is Ribosomal protein eL42-like (RPL36AL), found in Homo sapiens (Human).